The chain runs to 283 residues: 2-dehydro-3-deoxyphosphooctonate aldolase (283 aa).

Belongs to the KdsA family.

The protein resides in the cytoplasm. The enzyme catalyses D-arabinose 5-phosphate + phosphoenolpyruvate + H2O = 3-deoxy-alpha-D-manno-2-octulosonate-8-phosphate + phosphate. It functions in the pathway carbohydrate biosynthesis; 3-deoxy-D-manno-octulosonate biosynthesis; 3-deoxy-D-manno-octulosonate from D-ribulose 5-phosphate: step 2/3. It participates in bacterial outer membrane biogenesis; lipopolysaccharide biosynthesis. This Vibrio campbellii (strain ATCC BAA-1116) protein is 2-dehydro-3-deoxyphosphooctonate aldolase.